The following is a 222-amino-acid chain: UPF0758 protein Ppha_0935 (222 aa).

The MPN domain maps to 100-222 (KIQAARDVFE…CFSFRESGLL (123 aa)). The Zn(2+) site is built by histidine 171, histidine 173, and aspartate 184. The JAMM motif signature appears at 171–184 (HNHPSGDVEPSNAD).

It belongs to the UPF0758 family.

This Pelodictyon phaeoclathratiforme (strain DSM 5477 / BU-1) protein is UPF0758 protein Ppha_0935.